An 833-amino-acid polypeptide reads, in one-letter code: Urease (833 aa).

A Urease domain is found at 395 to 833 (GALDVHVHYI…LPLTRRYFVY (439 aa)). The Ni(2+) site is built by His-400 and His-402. His-402 and Ala-433 together coordinate urea. Lys-483 contributes to the Ni(2+) binding site. Lys-483 carries the post-translational modification N6-carboxylysine. 2 residues coordinate urea: His-485 and His-512. Ni(2+) is bound by residues His-512 and His-538. The Proton donor role is filled by His-586. Asp-626 contributes to the Ni(2+) binding site. Residue Ala-629 coordinates urea.

It in the C-terminal section; belongs to the metallo-dependent hydrolases superfamily. Urease alpha subunit family. In terms of assembly, homohexamer. Ni(2+) serves as cofactor. In terms of processing, carboxylation allows a single lysine to coordinate two nickel ions.

It catalyses the reaction urea + 2 H2O + H(+) = hydrogencarbonate + 2 NH4(+). The protein operates within nitrogen metabolism; urea degradation; CO(2) and NH(3) from urea (urease route): step 1/1. Its activity is regulated as follows. The urease accessory proteins URE4, URE6 and URE7 are required for urease activity, URE7 supplying nickel for the functional urease. In terms of biological role, plays a nutritional role via nitrogen acquisition in the environment. Contributes to the central nervous system invasion by enhancing yeast sequestration within microcapillary beds (such as within the brain) during hematogenous spread, thereby facilitating blood-to-brain invasion by C.neoformans. Affects fitness within the mammalian phagosome, promoting non-lytic exocytosis while delaying intracellular replication and thus reducing phagolysosomal membrane damage, events that could facilitate cryptococcal dissemination when transported inside macrophages. Urease activity is also associated with the regulation of key intracellular metabolic pathways, including melanin biosynthesis, polyamine biosynthesis, as well as intracellular levels of proline and reactive oxygen species. The polypeptide is Urease (Cryptococcus neoformans var. grubii serotype A (strain H99 / ATCC 208821 / CBS 10515 / FGSC 9487) (Filobasidiella neoformans var. grubii)).